The primary structure comprises 1315 residues: ESX secretion system protein EccC (1315 aa).

Positions 1–11 (MSTVLVRRKER) are enriched in basic residues. A disordered region spans residues 1 to 21 (MSTVLVRRKERRQPPQMPRGE). At 1–40 (MSTVLVRRKERRQPPQMPRGEILLESPPELPEVVTNSFQN) the chain is on the cytoplasmic side. Residues 41–61 (VLMYLPMAAGSAAMVFTFLNH) traverse the membrane as a helical segment. Over 62–64 (RNT) the chain is Extracellular. The helical transmembrane segment at 65–85 (LQLVAGGMFALSMFGMMFGQL) threads the bilayer. Residues 86-1315 (SQQSGERKTK…RLIQTAYRES (1230 aa)) lie on the Cytoplasmic side of the membrane. 2 FtsK domains span residues 456-656 (GRPL…MESR) and 813-1004 (RDPY…YESE). 479 to 486 (GATGSGKS) contributes to the ATP binding site. Residue glutamate 593 is part of the active site. The segment at 721-1315 (RPQVVEQPQP…RLIQTAYRES (595 aa)) is binds EsxB. ATP contacts are provided by residues 834–839 (QTGKST), threonine 1031, 1119–1124 (ECGKSN), glutamine 1293, and 1310–1311 (TA). In terms of domain architecture, FtsK 3 spans 1099-1282 (LSPVYLDFNT…MSGNKDEGIL (184 aa)).

As to quaternary structure, the cytosolic domain can form homodimers. Binds EsxB, which leads to multimerization, however EsxA disassembles the multimers, possibly by making EccC-EsxA-EsxB trimers instead of EccC-EsxB-EsxB-EccC tetramers. Forms a complex with EsxA and EsxB, probably wholly mediated by EsxB.

The protein resides in the cell membrane. Its activity is regulated as follows. EsxB binding to the third FtsK domain causes multimerization; a subsequent unknown step relieves the allosteric inhibition of linker 2 on FtsK domain 1, activating the ATPase activity; a mutant EsxB ('Ala-98') does not cause multimers to form. Functionally, part of the ESX specialized secretion system, which exports proteins from the cell including EsxA (ESAT-6) and EsxB (CFP-10). Has weak intrinsic ATPase activity; probably only the first FtsK domain can hydrolyze ATP. Might be the translocase subunit. The chain is ESX secretion system protein EccC from Thermomonospora curvata (strain ATCC 19995 / DSM 43183 / JCM 3096 / KCTC 9072 / NBRC 15933 / NCIMB 10081 / Henssen B9).